Reading from the N-terminus, the 555-residue chain is Disabled homolog 1 (555 aa).

The interval 1–26 (MSTETELQVAVKTSAKKDSRKKGQDR) is disordered. Over residues 15–26 (AKKDSRKKGQDR) the composition is skewed to basic and acidic residues. One can recognise a PID domain in the interval 36–189 (KGEGVRYKAK…CEQAVYQTIL (154 aa)). 3 positions are modified to phosphotyrosine: Tyr-198, Tyr-220, and Tyr-232. Disordered regions lie at residues 386 to 409 (PLAT…PRQK) and 469 to 555 (LTPV…QDGS). Residues 391-403 (PGTNDSARSSPQS) are compositionally biased toward polar residues. 2 stretches are compositionally biased toward low complexity: residues 470 to 479 (TPVTSTTPST) and 490 to 501 (SSPSKSSASHVS). Ser-491 is modified (phosphoserine; by CDK5). Acidic residues predominate over residues 504-513 (TADDIFEEGF).

In terms of assembly, associates with the SH2 domains of SRC, FYN and ABL. Interacts (phosphorylated on tyrosine residues) with CRK and CRKL (via respective SH2 domain). Interacts with SIAH1, LRP8 and VLDLR. Interacts with LRP1. Interacts with APLP1 (via NPXY motif). Interacts with DAB2IP. Interacts with ZSWIM8. In terms of processing, phosphorylated by FYN on Tyr-198 and Tyr-220 upon reelin induction in embryonic neurons. Also phosphorylated on Ser-491 independently of reelin signaling. Ubiquitinated by various cullin-5-RING E3 ubiquitin-protein ligase complexes (ECS complexes) following ligand-binding and phosphorylation, leading to its degradation. Ubiquitinated by the ECS(SOCS7) complex in the cortical plate of the developing cerebral cortex following ligand-binding and phosphorylation by FYN, leading to its degradation by the proteasome. Recognized by ZSWIM8 through a disorder targets misorder mechanism that eliminates misfolded DAB1 via ubiquitination and proteasomal degradation.

It localises to the cytoplasm. Signaling adapter of the reelin-mediated signaling pathway, which regulates the migration and differentiation of postmitotic neurons during brain development. Mediates intracellular transduction of Reelin signaling following reelin (RELN)-binding to its receptor: acts by docking proteins through its phosphotyrosine residues and PID domain. In Rattus norvegicus (Rat), this protein is Disabled homolog 1 (Dab1).